A 280-amino-acid chain; its full sequence is Coiled-coil domain-containing protein 106 (280 aa).

Positions 63 to 101 (TQLHMALERNSWLQKRIEDLEEERDFLRCQLDKFISSAR) form a coiled coil. Basic and acidic residues predominate over residues 103-121 (EAEDHCRMKPGPRRMEGDS). Residues 103 to 176 (EAEDHCRMKP…KPKARERQRV (74 aa)) are disordered. Ser-130 is subject to Phosphoserine. The span at 133 to 146 (ESAASSLSGASEEG) shows a compositional bias: low complexity. Residues 151 to 164 (RRRQKQKGGASRRR) carry the Bipartite nuclear localization signal motif. Over residues 152–168 (RRQKQKGGASRRRFGKP) the composition is skewed to basic residues.

As to quaternary structure, interacts with p53/TP53.

It localises to the nucleus. In terms of biological role, promotes the degradation of p53/TP53 protein and inhibits its transactivity. The sequence is that of Coiled-coil domain-containing protein 106 (CCDC106) from Homo sapiens (Human).